We begin with the raw amino-acid sequence, 262 residues long: Ribose-5-phosphate isomerase A (262 aa).

Residues 33 to 36 (TGST), 89 to 92 (DGAD), and 102 to 105 (KGGG) each bind substrate. Residue E111 is the Proton acceptor of the active site. K129 is a substrate binding site.

The protein belongs to the ribose 5-phosphate isomerase family. As to quaternary structure, homodimer.

It catalyses the reaction aldehydo-D-ribose 5-phosphate = D-ribulose 5-phosphate. It functions in the pathway carbohydrate degradation; pentose phosphate pathway; D-ribose 5-phosphate from D-ribulose 5-phosphate (non-oxidative stage): step 1/1. Functionally, catalyzes the reversible conversion of ribose-5-phosphate to ribulose 5-phosphate. In Ruegeria sp. (strain TM1040) (Silicibacter sp.), this protein is Ribose-5-phosphate isomerase A.